The sequence spans 344 residues: Biotin synthase (344 aa).

The Radical SAM core domain occupies 65 to 290 (PEVEVEGIIS…RTMLRFAGGR (226 aa)). Positions 80, 84, and 87 each coordinate [4Fe-4S] cluster. [2Fe-2S] cluster-binding residues include Cys123, Cys156, Cys215, and Arg285.

This sequence belongs to the radical SAM superfamily. Biotin synthase family. As to quaternary structure, homodimer. The cofactor is [4Fe-4S] cluster. It depends on [2Fe-2S] cluster as a cofactor.

It catalyses the reaction (4R,5S)-dethiobiotin + (sulfur carrier)-SH + 2 reduced [2Fe-2S]-[ferredoxin] + 2 S-adenosyl-L-methionine = (sulfur carrier)-H + biotin + 2 5'-deoxyadenosine + 2 L-methionine + 2 oxidized [2Fe-2S]-[ferredoxin]. It functions in the pathway cofactor biosynthesis; biotin biosynthesis; biotin from 7,8-diaminononanoate: step 2/2. Functionally, catalyzes the conversion of dethiobiotin (DTB) to biotin by the insertion of a sulfur atom into dethiobiotin via a radical-based mechanism. The sequence is that of Biotin synthase from Mycolicibacterium paratuberculosis (strain ATCC BAA-968 / K-10) (Mycobacterium paratuberculosis).